Reading from the N-terminus, the 112-residue chain is Protein Churchill (112 aa).

Positions 2, 5, 30, 33, 59, 61, 64, 66, 71, 88, and 91 each coordinate Zn(2+).

It belongs to the Churchill family.

In terms of biological role, transcriptional activator that mediates FGF signaling during neural development. Plays a role in the regulation of cell movement. Does not bind DNA by itself. The chain is Protein Churchill (CHURC1) from Bos taurus (Bovine).